A 499-amino-acid polypeptide reads, in one-letter code: Salviol synthase (499 aa).

The helical transmembrane segment at 4 to 24 (HIPSLVLCISFFIFFKIVSKL) threads the bilayer. Residue Cys-436 participates in heme binding.

It belongs to the cytochrome P450 family. Heme is required as a cofactor. Expressed in leaf glandular trichomes.

The protein localises to the membrane. It carries out the reaction ferruginol + reduced [NADPH--hemoprotein reductase] + O2 = salviol + oxidized [NADPH--hemoprotein reductase] + H2O + H(+). It functions in the pathway secondary metabolite biosynthesis; terpenoid biosynthesis. Functionally, monooxygenase involved in the biosynthesis of labdane-related diterpenes natural products. Catalyzes the oxidation of ferruginol to produce salviol. Salviol is an intermediate in the biosynthesis of carnosate, a potent antioxidant. The sequence is that of Salviol synthase from Salvia pomifera (Apple sage).